The chain runs to 79 residues: Cytochrome b (79 aa).

3 consecutive transmembrane segments (helical) span residues 1 to 7 (TAMFLAM), 31 to 52 (WLIRNMHANGASFFFICIYLHI), and 67 to 79 (WNVGVILLLLTMM). Heme b is bound by residues His-37 and His-51.

Belongs to the cytochrome b family. In terms of assembly, the cytochrome bc1 complex contains 3 respiratory subunits (MT-CYB, CYC1 and UQCRFS1), 2 core proteins (UQCRC1 and UQCRC2) and probably 6 low-molecular weight proteins. Heme b serves as cofactor.

Its subcellular location is the mitochondrion inner membrane. In terms of biological role, component of the ubiquinol-cytochrome c reductase complex (complex III or cytochrome b-c1 complex) that is part of the mitochondrial respiratory chain. The b-c1 complex mediates electron transfer from ubiquinol to cytochrome c. Contributes to the generation of a proton gradient across the mitochondrial membrane that is then used for ATP synthesis. The chain is Cytochrome b (mt-cyb) from Hypsophrys nicaraguensis (Moga).